The sequence spans 181 residues: dTTP/UTP pyrophosphatase (181 aa).

Aspartate 67 serves as the catalytic Proton acceptor.

Belongs to the Maf family. YhdE subfamily. A divalent metal cation serves as cofactor.

The protein resides in the cytoplasm. It carries out the reaction dTTP + H2O = dTMP + diphosphate + H(+). The enzyme catalyses UTP + H2O = UMP + diphosphate + H(+). Nucleoside triphosphate pyrophosphatase that hydrolyzes dTTP and UTP. May have a dual role in cell division arrest and in preventing the incorporation of modified nucleotides into cellular nucleic acids. The chain is dTTP/UTP pyrophosphatase from Latilactobacillus sakei subsp. sakei (strain 23K) (Lactobacillus sakei subsp. sakei).